The primary structure comprises 360 residues: Photosystem II protein D1 2 (360 aa).

The next 3 helical transmembrane spans lie at 29 to 46, 118 to 133, and 142 to 156; these read YIGW…AATT, HFLT…EWEL, and WICL…AATA. His-118 contacts chlorophyll a. Position 126 (Tyr-126) interacts with pheophytin a. [CaMn4O5] cluster is bound by residues Asp-170 and Glu-189. The helical transmembrane segment at 197 to 218 threads the bilayer; sequence FHMLGVAGVFGGSLFSAMHGSL. His-198 provides a ligand contact to chlorophyll a. Residues His-215 and 264-265 contribute to the a quinone site; that span reads SF. His-215 is a Fe cation binding site. Position 272 (His-272) interacts with Fe cation. Residues 274 to 288 form a helical membrane-spanning segment; it reads FLAAWPVIGIWFTAL. Residues His-332, Glu-333, Asp-342, and Ala-344 each coordinate [CaMn4O5] cluster. Positions 345–360 are excised as a propeptide; that stretch reads AGEVAPVALTAPAING.

Belongs to the reaction center PufL/M/PsbA/D family. PSII is composed of 1 copy each of membrane proteins PsbA, PsbB, PsbC, PsbD, PsbE, PsbF, PsbH, PsbI, PsbJ, PsbK, PsbL, PsbM, PsbT, PsbX, PsbY, PsbZ, Psb30/Ycf12, peripheral proteins PsbO, CyanoQ (PsbQ), PsbU, PsbV and a large number of cofactors. It forms dimeric complexes. It depends on The D1/D2 heterodimer binds P680, chlorophylls that are the primary electron donor of PSII, and subsequent electron acceptors. It shares a non-heme iron and each subunit binds pheophytin, quinone, additional chlorophylls, carotenoids and lipids. D1 provides most of the ligands for the Mn4-Ca-O5 cluster of the oxygen-evolving complex (OEC). There is also a Cl(-1) ion associated with D1 and D2, which is required for oxygen evolution. The PSII complex binds additional chlorophylls, carotenoids and specific lipids. as a cofactor. In terms of processing, tyr-161 forms a radical intermediate that is referred to as redox-active TyrZ, YZ or Y-Z. Post-translationally, C-terminally processed by CtpA; processing is essential to allow assembly of the oxygen-evolving complex and thus photosynthetic growth.

The protein localises to the cellular thylakoid membrane. The enzyme catalyses 2 a plastoquinone + 4 hnu + 2 H2O = 2 a plastoquinol + O2. Photosystem II (PSII) is a light-driven water:plastoquinone oxidoreductase that uses light energy to abstract electrons from H(2)O, generating O(2) and a proton gradient subsequently used for ATP formation. It consists of a core antenna complex that captures photons, and an electron transfer chain that converts photonic excitation into a charge separation. The D1/D2 (PsbA/PsbD) reaction center heterodimer binds P680, the primary electron donor of PSII as well as several subsequent electron acceptors. The polypeptide is Photosystem II protein D1 2 (Trichormus variabilis (strain ATCC 29413 / PCC 7937) (Anabaena variabilis)).